Consider the following 588-residue polypeptide: Polyamine deacetylase HDAC10 (588 aa).

Positions 1 to 302 (MGTALVYHED…AGGRICAVLE (302 aa)) are histone deacetylase. Residue His-135 is part of the active site.

This sequence belongs to the histone deacetylase family. HD type 2 subfamily. As to quaternary structure, interacts with HDAC3. Interacts with HDAC2 and NCOR2/SMRT. Interacts with HSPA8/HSC70. Interacts with MSH2.

It localises to the cytoplasm. It is found in the nucleus. The enzyme catalyses N(8)-acetylspermidine + H2O = spermidine + acetate. The catalysed reaction is N-acetylputrescine + H2O = putrescine + acetate. It catalyses the reaction N-acetylcadaverine + H2O = cadaverine + acetate. It carries out the reaction N(6)-acetyl-L-lysyl-[protein] + H2O = L-lysyl-[protein] + acetate. Polyamine deacetylase (PDAC), which acts preferentially on N(8)-acetylspermidine, and also on acetylcadaverine and acetylputrescine. Exhibits attenuated catalytic activity toward N(1),N(8)-diacetylspermidine and very low activity, if any, toward N(1)-acetylspermidine. Histone deacetylase activity has been observed in vitro. Has also been shown to be involved in MSH2 deacetylation. The physiological relevance of protein/histone deacetylase activity is unclear and could be very weak. May play a role in the promotion of late stages of autophagy, possibly autophagosome-lysosome fusion and/or lysosomal exocytosis in neuroblastoma cells. May play a role in homologous recombination. May promote DNA mismatch repair. This is Polyamine deacetylase HDAC10 (Hdac10) from Rattus norvegicus (Rat).